Consider the following 353-residue polypeptide: Ribosomal RNA small subunit methyltransferase (353 aa).

Residues 1-10 (MAGGKIRKEK) are compositionally biased toward basic residues. The segment at 1–23 (MAGGKIRKEKPKASNRAPSNHYQ) is disordered. S-adenosyl-L-methionine-binding residues include His-35, Leu-37, Gly-62, Glu-83, Asp-111, and Asn-126. The segment at 270 to 313 (ALNTTSMDLGDQSMGMEDDDNEMDDDDMEMDEGEGDGGETSEFK) is disordered. The span at 285–308 (MEDDDNEMDDDDMEMDEGEGDGGE) shows a compositional bias: acidic residues.

It belongs to the class I-like SAM-binding methyltransferase superfamily. rRNA adenine N(6)-methyltransferase family. As to expression, expressed in rapidly dividing tissues, including root meristems and lateral root primordia, developing cotyledons and leaves, petals, anther, pollen grains and silique abscission zone.

It localises to the nucleus. The protein localises to the nucleolus. It carries out the reaction adenosine(1785)/adenosine(1786) in 18S rRNA + 4 S-adenosyl-L-methionine = N(6)-dimethyladenosine(1785)/N(6)-dimethyladenosine(1786) in 18S rRNA + 4 S-adenosyl-L-homocysteine + 4 H(+). Functionally, N6-adenine methyltransferase which modifies the AA dinucleotide at the plant nuclear 18S rRNA nucleotides A1785 and A1786. Required for generating appropriate patterns of gene expression during root development, including the cell-specific expression of transcriptional regulators involved in root hair and non-hair cells patterning. The sequence is that of Ribosomal RNA small subunit methyltransferase from Arabidopsis thaliana (Mouse-ear cress).